The sequence spans 245 residues: Ribosomal protein L11 methyltransferase (245 aa).

Thr101, Gly122, Asp144, and Asn184 together coordinate S-adenosyl-L-methionine.

The protein belongs to the methyltransferase superfamily. PrmA family.

It is found in the cytoplasm. It carries out the reaction L-lysyl-[protein] + 3 S-adenosyl-L-methionine = N(6),N(6),N(6)-trimethyl-L-lysyl-[protein] + 3 S-adenosyl-L-homocysteine + 3 H(+). Functionally, methylates ribosomal protein L11. The polypeptide is Ribosomal protein L11 methyltransferase (Aquifex aeolicus (strain VF5)).